The sequence spans 225 residues: NAD(P)H-quinone oxidoreductase subunit K, chloroplastic (225 aa).

Cysteine 43, cysteine 44, cysteine 108, and cysteine 139 together coordinate [4Fe-4S] cluster.

Belongs to the complex I 20 kDa subunit family. As to quaternary structure, NDH is composed of at least 16 different subunits, 5 of which are encoded in the nucleus. [4Fe-4S] cluster is required as a cofactor.

It is found in the plastid. The protein localises to the chloroplast thylakoid membrane. The enzyme catalyses a plastoquinone + NADH + (n+1) H(+)(in) = a plastoquinol + NAD(+) + n H(+)(out). It catalyses the reaction a plastoquinone + NADPH + (n+1) H(+)(in) = a plastoquinol + NADP(+) + n H(+)(out). Its function is as follows. NDH shuttles electrons from NAD(P)H:plastoquinone, via FMN and iron-sulfur (Fe-S) centers, to quinones in the photosynthetic chain and possibly in a chloroplast respiratory chain. The immediate electron acceptor for the enzyme in this species is believed to be plastoquinone. Couples the redox reaction to proton translocation, and thus conserves the redox energy in a proton gradient. The protein is NAD(P)H-quinone oxidoreductase subunit K, chloroplastic of Capsella bursa-pastoris (Shepherd's purse).